The sequence spans 265 residues: Phosphonoacetaldehyde hydrolase (265 aa).

Residue aspartate 9 is the Nucleophile of the active site. Mg(2+)-binding residues include aspartate 9 and alanine 11. Lysine 50 (schiff-base intermediate with substrate) is an active-site residue. Aspartate 184 provides a ligand contact to Mg(2+).

The protein belongs to the HAD-like hydrolase superfamily. PhnX family. As to quaternary structure, homodimer. Mg(2+) serves as cofactor.

The catalysed reaction is phosphonoacetaldehyde + H2O = acetaldehyde + phosphate + H(+). Functionally, involved in phosphonate degradation. The sequence is that of Phosphonoacetaldehyde hydrolase from Lactiplantibacillus plantarum (strain ATCC BAA-793 / NCIMB 8826 / WCFS1) (Lactobacillus plantarum).